We begin with the raw amino-acid sequence, 949 residues long: Glycine dehydrogenase (decarboxylating) (949 aa).

Lys-699 is subject to N6-(pyridoxal phosphate)lysine.

Belongs to the GcvP family. In terms of assembly, the glycine cleavage system is composed of four proteins: P, T, L and H. The cofactor is pyridoxal 5'-phosphate.

The enzyme catalyses N(6)-[(R)-lipoyl]-L-lysyl-[glycine-cleavage complex H protein] + glycine + H(+) = N(6)-[(R)-S(8)-aminomethyldihydrolipoyl]-L-lysyl-[glycine-cleavage complex H protein] + CO2. Functionally, the glycine cleavage system catalyzes the degradation of glycine. The P protein binds the alpha-amino group of glycine through its pyridoxal phosphate cofactor; CO(2) is released and the remaining methylamine moiety is then transferred to the lipoamide cofactor of the H protein. The sequence is that of Glycine dehydrogenase (decarboxylating) from Roseobacter denitrificans (strain ATCC 33942 / OCh 114) (Erythrobacter sp. (strain OCh 114)).